The following is a 73-amino-acid chain: MKSWMAILLVMALIIFTLDNCYSTDDKPIGKCGDRQRNKLCLVCQDRSQIDYYYTECCIYDQTYYMCLDMLRH.

An N-terminal signal peptide occupies residues 1–23; that stretch reads MKSWMAILLVMALIIFTLDNCYS. 3 disulfide bridges follow: cysteine 32–cysteine 58, cysteine 41–cysteine 57, and cysteine 44–cysteine 67.

Belongs to the scoloptoxin family. In terms of tissue distribution, expressed by the venom gland.

The protein resides in the secreted. Its function is as follows. Inhibits voltage-gated potassium channels. The polypeptide is Kappa-scoloptoxin(03)-Ssm1c (Scolopendra mutilans (Chinese red-headed centipede)).